We begin with the raw amino-acid sequence, 234 residues long: Orotate phosphoribosyltransferase (234 aa).

Lys-37 serves as a coordination point for 5-phospho-alpha-D-ribose 1-diphosphate. Residue 45-46 (FF) coordinates orotate. 5-phospho-alpha-D-ribose 1-diphosphate-binding positions include 83 to 84 (YK), Arg-109, Lys-110, Lys-113, His-115, and 134 to 142 (DDVISAGTS). Orotate is bound by residues Ser-138 and Arg-166.

Belongs to the purine/pyrimidine phosphoribosyltransferase family. PyrE subfamily. As to quaternary structure, homodimer. Mg(2+) is required as a cofactor.

The enzyme catalyses orotidine 5'-phosphate + diphosphate = orotate + 5-phospho-alpha-D-ribose 1-diphosphate. The protein operates within pyrimidine metabolism; UMP biosynthesis via de novo pathway; UMP from orotate: step 1/2. In terms of biological role, catalyzes the transfer of a ribosyl phosphate group from 5-phosphoribose 1-diphosphate to orotate, leading to the formation of orotidine monophosphate (OMP). The chain is Orotate phosphoribosyltransferase from Methylibium petroleiphilum (strain ATCC BAA-1232 / LMG 22953 / PM1).